We begin with the raw amino-acid sequence, 137 residues long: Probable Hsp20 family chaperone (137 aa).

The sHSP domain maps to 25–137 (LTNNNNIMKT…PKEKHYIKLN (113 aa)).

The protein belongs to the small heat shock protein (HSP20) family.

Probable chaperone. This is Probable Hsp20 family chaperone from Onion yellows phytoplasma (strain OY-M).